The following is a 127-amino-acid chain: MATRRNPTKESITTSPPPDQQPRQPGELEHREAIQLRDLPGYPQQVLWKLIIYSIAVLVLPLSAYFYSVNYVFDGNTTYAGATAAITANLILFSYIVVAMREDKGDQEQLREQQQLRGNKEETKKMK.

The tract at residues 1–28 is disordered; that stretch reads MATRRNPTKESITTSPPPDQQPRQPGEL. At 1–45 the chain is on the cytoplasmic side; that stretch reads MATRRNPTKESITTSPPPDQQPRQPGELEHREAIQLRDLPGYPQQ. The chain crosses the membrane as a helical span at residues 46 to 66; it reads VLWKLIIYSIAVLVLPLSAYF. Residues 67 to 79 are Lumenal-facing; sequence YSVNYVFDGNTTY. A helical transmembrane segment spans residues 80 to 100; the sequence is AGATAAITANLILFSYIVVAM. Topologically, residues 101–127 are cytoplasmic; that stretch reads REDKGDQEQLREQQQLRGNKEETKKMK. A disordered region spans residues 107–127; the sequence is QEQLREQQQLRGNKEETKKMK. Basic and acidic residues predominate over residues 118 to 127; it reads GNKEETKKMK. Residues 124–127 carry the Prevents secretion from ER motif; that stretch reads KKMK.

This sequence belongs to the VMA21 family.

It localises to the endoplasmic reticulum membrane. The protein localises to the endoplasmic reticulum-Golgi intermediate compartment membrane. The protein resides in the cytoplasmic vesicle. It is found in the COPII-coated vesicle membrane. Functionally, required for the assembly of the V0 complex of the vacuolar ATPase (V-ATPase) in the endoplasmic reticulum. This chain is Vacuolar ATPase assembly integral membrane protein VMA21, found in Coccidioides immitis (strain RS) (Valley fever fungus).